Here is a 122-residue protein sequence, read N- to C-terminus: Glycine cleavage system H protein (122 aa).

The 83-residue stretch at M19–T101 folds into the Lipoyl-binding domain. Position 60 is an N6-lipoyllysine (K60).

The protein belongs to the GcvH family. The glycine cleavage system is composed of four proteins: P, T, L and H. (R)-lipoate is required as a cofactor.

Functionally, the glycine cleavage system catalyzes the degradation of glycine. The H protein shuttles the methylamine group of glycine from the P protein to the T protein. The polypeptide is Glycine cleavage system H protein (Bartonella tribocorum (strain CIP 105476 / IBS 506)).